The chain runs to 220 residues: UPF0319 protein YccT (220 aa).

An N-terminal signal peptide occupies residues 1–20; that stretch reads MKTGALATFLALCLPATVFA.

This sequence belongs to the UPF0319 family.

The chain is UPF0319 protein YccT from Salmonella heidelberg (strain SL476).